The chain runs to 122 residues: Large ribosomal subunit protein uL14 (122 aa).

The protein belongs to the universal ribosomal protein uL14 family. As to quaternary structure, part of the 50S ribosomal subunit. Forms a cluster with proteins L3 and L19. In the 70S ribosome, L14 and L19 interact and together make contacts with the 16S rRNA in bridges B5 and B8.

Its function is as follows. Binds to 23S rRNA. Forms part of two intersubunit bridges in the 70S ribosome. The chain is Large ribosomal subunit protein uL14 from Rhizobium johnstonii (strain DSM 114642 / LMG 32736 / 3841) (Rhizobium leguminosarum bv. viciae).